We begin with the raw amino-acid sequence, 71 residues long: Large ribosomal subunit protein uL29 (71 aa).

This sequence belongs to the universal ribosomal protein uL29 family.

This is Large ribosomal subunit protein uL29 from Methanococcus maripaludis (strain C7 / ATCC BAA-1331).